Reading from the N-terminus, the 85-residue chain is Neurotoxin beta-KTx 17 (85 aa).

Positions 1–20 are cleaved as a signal peptide; it reads MKQYIFFLALIVLVSTFAEA. Residues 21-37 constitute a propeptide that is removed on maturation; the sequence is GKKTEILDKVKKVFSKG. Positions 49 to 85 constitute a BetaSPN-type CS-alpha/beta domain; that stretch reads ELGCPFIEKWCEDHCESKKQVGKCENFDCSCVKLGGK. Disulfide bonds link Cys52/Cys72, Cys59/Cys77, and Cys63/Cys79.

Belongs to the long chain scorpion toxin family. Class 2 subfamily. In terms of tissue distribution, expressed by the venom gland.

The protein localises to the secreted. Functionally, has a very weak effect to block voltage-gated potassium channel Kv1.1/KCNA1. This chain is Neurotoxin beta-KTx 17, found in Lychas mucronatus (Chinese swimming scorpion).